Reading from the N-terminus, the 117-residue chain is Ribosome-binding factor A (117 aa).

It belongs to the RbfA family. In terms of assembly, monomer. Binds 30S ribosomal subunits, but not 50S ribosomal subunits or 70S ribosomes.

The protein localises to the cytoplasm. In terms of biological role, one of several proteins that assist in the late maturation steps of the functional core of the 30S ribosomal subunit. Associates with free 30S ribosomal subunits (but not with 30S subunits that are part of 70S ribosomes or polysomes). Required for efficient processing of 16S rRNA. May interact with the 5'-terminal helix region of 16S rRNA. In Lactiplantibacillus plantarum (strain ATCC BAA-793 / NCIMB 8826 / WCFS1) (Lactobacillus plantarum), this protein is Ribosome-binding factor A.